The following is a 210-amino-acid chain: Protein SgcE (210 aa).

Residue serine 6 coordinates substrate. 3 residues coordinate a divalent metal cation: histidine 31, aspartate 33, and histidine 64. Catalysis depends on aspartate 33, which acts as the Proton acceptor. Substrate contacts are provided by residues histidine 64, 140–143 (DGQG), 169–171 (DGG), and 191–192 (GR). Aspartate 169 contributes to the a divalent metal cation binding site. The Proton donor role is filled by aspartate 169.

The protein belongs to the ribulose-phosphate 3-epimerase family. Co(2+) serves as cofactor. Requires Fe(2+) as cofactor. Mn(2+) is required as a cofactor. The cofactor is Zn(2+).

It functions in the pathway carbohydrate degradation. Probable pentose-5-phosphate 3-epimerase. In Escherichia coli (strain K12), this protein is Protein SgcE (sgcE).